The primary structure comprises 577 residues: Arginine--tRNA ligase (577 aa).

Positions 132 to 142 (ANPTGPLHVGH) match the 'HIGH' region motif.

Belongs to the class-I aminoacyl-tRNA synthetase family. As to quaternary structure, monomer.

The protein localises to the cytoplasm. It catalyses the reaction tRNA(Arg) + L-arginine + ATP = L-arginyl-tRNA(Arg) + AMP + diphosphate. This chain is Arginine--tRNA ligase, found in Pelagibacter ubique (strain HTCC1062).